The chain runs to 213 residues: Putative 3-methyladenine DNA glycosylase (213 aa).

A disordered region spans residues 165–187; sequence GTPVPPDQVRNGPRTGVSGDGGV.

This sequence belongs to the DNA glycosylase MPG family.

This is Putative 3-methyladenine DNA glycosylase from Streptomyces avermitilis (strain ATCC 31267 / DSM 46492 / JCM 5070 / NBRC 14893 / NCIMB 12804 / NRRL 8165 / MA-4680).